A 186-amino-acid polypeptide reads, in one-letter code: Large ribosomal subunit protein uL5 (186 aa).

Belongs to the universal ribosomal protein uL5 family. As to quaternary structure, part of the 50S ribosomal subunit; part of the 5S rRNA/L5/L18/L25 subcomplex. Contacts the 5S rRNA and the P site tRNA. Forms a bridge to the 30S subunit in the 70S ribosome.

Functionally, this is one of the proteins that bind and probably mediate the attachment of the 5S RNA into the large ribosomal subunit, where it forms part of the central protuberance. In the 70S ribosome it contacts protein S13 of the 30S subunit (bridge B1b), connecting the 2 subunits; this bridge is implicated in subunit movement. Contacts the P site tRNA; the 5S rRNA and some of its associated proteins might help stabilize positioning of ribosome-bound tRNAs. In Phenylobacterium zucineum (strain HLK1), this protein is Large ribosomal subunit protein uL5.